The chain runs to 173 residues: Adenine phosphoribosyltransferase (173 aa).

This sequence belongs to the purine/pyrimidine phosphoribosyltransferase family. In terms of assembly, homodimer.

The protein resides in the cytoplasm. It carries out the reaction AMP + diphosphate = 5-phospho-alpha-D-ribose 1-diphosphate + adenine. Its pathway is purine metabolism; AMP biosynthesis via salvage pathway; AMP from adenine: step 1/1. Catalyzes a salvage reaction resulting in the formation of AMP, that is energically less costly than de novo synthesis. This chain is Adenine phosphoribosyltransferase, found in Listeria monocytogenes serovar 1/2a (strain ATCC BAA-679 / EGD-e).